The following is a 627-amino-acid chain: Siderophore iron transporter ARN1 (627 aa).

Residues 1–70 (MESVHSRDPV…TEIIGSAYNK (70 aa)) lie on the Extracellular side of the membrane. The helical transmembrane segment at 71–91 (WYLQAILLLSAFICGYGYGLD) threads the bilayer. At 92-110 (GNIRYIYTGYATSSYSEHS) the chain is on the cytoplasmic side. Residues 111 to 131 (LLSTINVINAVVSAASQIIYA) traverse the membrane as a helical segment. Topologically, residues 132–135 (RLSD) are extracellular. The chain crosses the membrane as a helical span at residues 136 to 156 (VFGRLYLFISAVILYVVGTII). Over 157–167 (QSQAYDVQRYA) the chain is Cytoplasmic. Residues 168 to 188 (AGAIFYNAGYVGVILILLIIL) traverse the membrane as a helical segment. Topologically, residues 189–197 (SDFSSLKWR) are extracellular. The helical transmembrane segment at 198-218 (LLYQFVPTWPFIINTWIAGNI) threads the bilayer. Over 219–231 (TSRANPVVNWSWD) the chain is Cytoplasmic. The chain crosses the membrane as a helical span at residues 232–252 (VGMWAFIFPLSCVPIVLCMLH). Over 253–290 (MQWRARKTPEWHALKGQKSYYQEHGFIKILKQLFWMLD) the chain is Extracellular. A helical transmembrane segment spans residues 291 to 311 (VVGVLLMGCSLGCILVPLTLA). Topologically, residues 312-323 (GGVKTTWNDSRL) are cytoplasmic. A helical membrane pass occupies residues 324–344 (IGPFVLGFVLIPILWIWEYRF). Residues 345–367 (ARDPILPYRLVKDRAVWSSMGIS) lie on the Extracellular side of the membrane. A helical transmembrane segment spans residues 368–388 (FLIDFIYYMAADYLYTVMIVA). Topologically, residues 389–398 (VNESVKSATR) are cytoplasmic. A helical transmembrane segment spans residues 399–419 (IATLSSFVSTVASPFFALLVT). Residues 420 to 424 (RCTRL) lie on the Extracellular side of the membrane. Residues 425 to 445 (KPFIMFGCALWMVAMGLLYHF) traverse the membrane as a helical segment. Residues 446–454 (RGGSQSHSG) are Cytoplasmic-facing. Residues 455-475 (IIGALCVWGVGTTLFTYPVTV) traverse the membrane as a helical segment. At 476-563 (SVQSAVSHEN…LMNAYKYVQR (88 aa)) the chain is on the extracellular side. A helical transmembrane segment spans residues 564-584 (LETIVALVFCVPLIAFSLCLR). Residues 585–627 (DPKLTDTVAVEYIEDGEYVDTKDNDPILDWFEKLPSKFTFKRE) are Cytoplasmic-facing.

The protein belongs to the major facilitator superfamily.

Its subcellular location is the cell membrane. It is found in the endosome membrane. In terms of biological role, involved in the transport of siderophore ferrichrome and so has a role in iron homeostasis. This is Siderophore iron transporter ARN1 (ARN1) from Saccharomyces cerevisiae (strain ATCC 204508 / S288c) (Baker's yeast).